We begin with the raw amino-acid sequence, 259 residues long: Undecaprenyl-diphosphatase 3 (259 aa).

A run of 8 helical transmembrane segments spans residues Met1–Ile21, Ala39–Tyr59, Phe71–Leu91, Ile99–Met119, Ile133–Ile153, Ala174–Val194, Ser208–Ile228, and Leu236–Thr256.

It belongs to the UppP family.

The protein localises to the cell membrane. It carries out the reaction di-trans,octa-cis-undecaprenyl diphosphate + H2O = di-trans,octa-cis-undecaprenyl phosphate + phosphate + H(+). In terms of biological role, catalyzes the dephosphorylation of undecaprenyl diphosphate (UPP). Confers resistance to bacitracin. The protein is Undecaprenyl-diphosphatase 3 of Bacillus cereus (strain ATCC 10987 / NRS 248).